We begin with the raw amino-acid sequence, 553 residues long: Probable malate:quinone oxidoreductase (553 aa).

A disordered region spans residues 524 to 553; it reads PPPKIDVNTPSQATGTAPARPAKASADMAL.

Belongs to the MQO family. It depends on FAD as a cofactor.

The catalysed reaction is (S)-malate + a quinone = a quinol + oxaloacetate. It functions in the pathway carbohydrate metabolism; tricarboxylic acid cycle; oxaloacetate from (S)-malate (quinone route): step 1/1. The chain is Probable malate:quinone oxidoreductase from Burkholderia lata (strain ATCC 17760 / DSM 23089 / LMG 22485 / NCIMB 9086 / R18194 / 383).